The sequence spans 42 residues: uncharacterized protein (42 aa).

The helical transmembrane segment at 5–27 threads the bilayer; it reads FLHTNITIIPHSVLYVSLSYYII.

It is found in the membrane. This is an uncharacterized protein from Saccharomyces cerevisiae (strain ATCC 204508 / S288c) (Baker's yeast).